The chain runs to 400 residues: Nicotinate phosphoribosyltransferase (400 aa).

At His-220 the chain carries Phosphohistidine; by autocatalysis.

Belongs to the NAPRTase family. In terms of processing, transiently phosphorylated on a His residue during the reaction cycle. Phosphorylation strongly increases the affinity for substrates and increases the rate of nicotinate D-ribonucleotide production. Dephosphorylation regenerates the low-affinity form of the enzyme, leading to product release.

It carries out the reaction nicotinate + 5-phospho-alpha-D-ribose 1-diphosphate + ATP + H2O = nicotinate beta-D-ribonucleotide + ADP + phosphate + diphosphate. Its pathway is cofactor biosynthesis; NAD(+) biosynthesis; nicotinate D-ribonucleotide from nicotinate: step 1/1. Its function is as follows. Catalyzes the synthesis of beta-nicotinate D-ribonucleotide from nicotinate and 5-phospho-D-ribose 1-phosphate at the expense of ATP. This chain is Nicotinate phosphoribosyltransferase, found in Salmonella schwarzengrund (strain CVM19633).